A 296-amino-acid polypeptide reads, in one-letter code: GTPase Era (296 aa).

The Era-type G domain occupies 7-174 (KCSMNAIVGT…INYLCEISPS (168 aa)). The interval 15-22 (GTTNAGKS) is G1. 15–22 (GTTNAGKS) serves as a coordination point for GTP. Positions 41-45 (QTTRV) are G2. A G3 region spans residues 62-65 (DTPG). Residues 62-66 (DTPGI) and 124-127 (NKID) each bind GTP. Residues 124 to 127 (NKID) are G4. The segment at 153 to 155 (ISA) is G5. A KH type-2 domain is found at 205-282 (LHHELPYSLS…HLFLFVKVRE (78 aa)).

Belongs to the TRAFAC class TrmE-Era-EngA-EngB-Septin-like GTPase superfamily. Era GTPase family. Monomer.

The protein resides in the cytoplasm. The protein localises to the cell inner membrane. In terms of biological role, an essential GTPase that binds both GDP and GTP, with rapid nucleotide exchange. Plays a role in 16S rRNA processing and 30S ribosomal subunit biogenesis and possibly also in cell cycle regulation and energy metabolism. This chain is GTPase Era, found in Ehrlichia canis (strain Jake).